We begin with the raw amino-acid sequence, 247 residues long: Carboxy-S-adenosyl-L-methionine synthase (247 aa).

Residues Tyr-39, 64-66, 89-90, 117-118, Asn-132, and Arg-199 contribute to the S-adenosyl-L-methionine site; these read GCS, DN, and DI.

It belongs to the class I-like SAM-binding methyltransferase superfamily. Cx-SAM synthase family. In terms of assembly, homodimer.

It catalyses the reaction prephenate + S-adenosyl-L-methionine = carboxy-S-adenosyl-L-methionine + 3-phenylpyruvate + H2O. Functionally, catalyzes the conversion of S-adenosyl-L-methionine (SAM) to carboxy-S-adenosyl-L-methionine (Cx-SAM). This chain is Carboxy-S-adenosyl-L-methionine synthase, found in Escherichia coli O139:H28 (strain E24377A / ETEC).